Consider the following 252-residue polypeptide: Small ribosomal subunit protein uS2A (252 aa).

Ser-2 is subject to N-acetylserine. The disordered stretch occupies residues 209–252 (EVEQQAAEETTSTGADAEESKEEVAEGQNEASEWAEENTEAVSW). Acidic residues predominate over residues 241–252 (EWAEENTEAVSW).

Belongs to the universal ribosomal protein uS2 family. Component of the small ribosomal subunit. Mature ribosomes consist of a small (40S) and a large (60S) subunit. The 40S subunit contains about 33 different proteins and 1 molecule of RNA (18S). The 60S subunit contains about 49 different proteins and 3 molecules of RNA (25S, 5.8S and 5S). Interacts with RPS21.

Its subcellular location is the cytoplasm. Its function is as follows. Required for the assembly and/or stability of the 40S ribosomal subunit. Required for the processing of the 20S rRNA-precursor to mature 18S rRNA in a late step of the maturation of 40S ribosomal subunits. This chain is Small ribosomal subunit protein uS2A, found in Vanderwaltozyma polyspora (strain ATCC 22028 / DSM 70294 / BCRC 21397 / CBS 2163 / NBRC 10782 / NRRL Y-8283 / UCD 57-17) (Kluyveromyces polysporus).